A 1290-amino-acid polypeptide reads, in one-letter code: Sorbin and SH3 domain-containing protein 1 (1290 aa).

3 disordered regions span residues 1-211 (MSSE…LSDV), 238-271 (HKLNRDDDSDVHSPRYSFSDDTKSPLSVPRSKSE), and 286-313 (TLPLPARSSSLKSSPERNDWEPLDKKVD). A compositionally biased stretch (low complexity) spans 45–61 (SSSYRGTPSSSPVSPQE). Thr-51 carries the phosphothreonine modification. 3 positions are modified to phosphoserine: Ser-55, Ser-58, and Ser-62. A compositionally biased stretch (basic and acidic residues) spans 62-71 (SPKHESKSGL). Polar residues-rich tracts occupy residues 83 to 95 (LSSSADTNGNAQP) and 123 to 153 (EVSSSHIETDSQDFPPTSRPSSAYPSTTIVN). Basic and acidic residues predominate over residues 161-173 (HNRDPASERRAGE). A phosphoserine mark is found at Asp-164 and Asp-175. The residue at position 179 (Thr-179) is a Phosphothreonine. Residues Ser-185, Ala-194, Ser-204, Ser-209, Ser-254, Ser-261, Ser-270, and Pro-288 each carry the phosphoserine modification. Residues 189 to 199 (ASERRAKDASR) show a composition bias toward basic and acidic residues. Residues 202 to 247 (VRSAQDLSDVSTDEVGIPLRNTERSKDWYKTMFKQIHKLNRDDDSD) form the SoHo domain. Over residues 240–260 (LNRDDDSDVHSPRYSFSDDTK) the composition is skewed to basic and acidic residues. Residues 299–313 (SPERNDWEPLDKKVD) are compositionally biased toward basic and acidic residues. A Phosphotyrosine; by ABL1 modification is found at Tyr-325. 5 positions are modified to phosphoserine: Ser-345, Pro-346, Tyr-357, Ser-376, and Ser-407. A disordered region spans residues 389-416 (VETVNKSPSANSPQSSAVSPTPDITSEP). Polar residues predominate over residues 392–412 (VNKSPSANSPQSSAVSPTPDI). Tyr-421 is modified (phosphotyrosine; by ABL1). Residues Ser-432 and Ser-470 each carry the phosphoserine modification. Disordered regions lie at residues 463–482 (LSGLKRPSSSASTKVDRKGG), 588–607 (YDSKSSSTMSLQEYGTSSRR), 697–739 (SLDF…EMDG), 783–803 (VSNDSREGSGGSVHGDFPKHR), 822–841 (RKHEQQSSRQSDWRSDSRGD), and 862–972 (PLQQ…SPRH). The residue at position 475 (Thr-475) is a Phosphothreonine. 2 stretches are compositionally biased toward polar residues: residues 595-606 (TMSLQEYGTSSR) and 704-722 (LSKSPTPVLSRSGLTSARS). Ser-969 carries the post-translational modification Phosphoserine. 2 SH3 domains span residues 1049–1108 (LEMR…LLPP) and 1123–1184 (LEYG…VLKR). A Phosphothreonine modification is found at Thr-1189. Phosphotyrosine is present on residues Tyr-1193 and Tyr-1198. Residues 1198–1210 (YSSSPSRSATVSP) are compositionally biased toward low complexity. The disordered stretch occupies residues 1198–1227 (YSSSPSRSATVSPQQPQAQQRRVTPDRSQP). A phosphoserine mark is found at Ser-1201 and Ser-1209. The span at 1211–1227 (QQPQAQQRRVTPDRSQP) shows a compositional bias: polar residues. An SH3 3 domain is found at 1229-1290 (LDLCSYQALY…PGNYVKPLYL (62 aa)). Tyr-1238 is modified (phosphotyrosine; by ABL1).

In terms of assembly, interacts (via SH3 domain 2) with PXN. Interacts with the long isoform of AFDN and with VCL. AFDN and VCL bind to SORBS1 in a competitive manner and do not form a ternary complex. Interacts with ABL1, CBL, CBLB and INPPL1/SHIP2 through the third SH3 domain. Interaction with ABL1 occurs only after insulin stimulation while this has no effect on the interaction with INPPL1. Interacts with the insulin receptor but dissociates from it following insulin stimulation. Also interacts with SCA7, PTK2/FAK1 and flotillin. Interacts (via third SH3 domain) with the Ten-1 ICD form of TENM1; the interaction induces the translocation of SORBS1 to the nucleus. Interacts with INSM1. O-glycosylated. In terms of tissue distribution, expressed in all tissues tested: heart, brain, spleen, lung, liver, muscle, kidney and testis. Expressed in 3T3-L1 adipocytes but not in 3T3-L1 fibroblasts.

It localises to the cell junction. The protein resides in the adherens junction. Its subcellular location is the cell membrane. It is found in the cytoplasm. The protein localises to the cytoskeleton. It localises to the focal adhesion. The protein resides in the nucleus. Its subcellular location is the nucleus matrix. Functionally, plays a role in tyrosine phosphorylation of CBL by linking CBL to the insulin receptor. Required for insulin-stimulated glucose transport. Involved in formation of actin stress fibers and focal adhesions. This Mus musculus (Mouse) protein is Sorbin and SH3 domain-containing protein 1.